A 757-amino-acid chain; its full sequence is RNA cytosine C(5)-methyltransferase NSUN2 (757 aa).

The disordered stretch occupies residues 1–35; sequence MGRRARGRRFQQPPQPEGEEDASDGGRKRGQAGWE. Position 23 is a phosphoserine (S23). K46 participates in a covalent cross-link: Glycyl lysine isopeptide (Lys-Gly) (interchain with G-Cter in SUMO2). At S139 the chain carries Phosphoserine; by AURKB. S-adenosyl-L-methionine is bound by residues 184-190, D215, D242, and D268; that span reads CAAPGSK. C321 serves as the catalytic Nucleophile. Positions 436–504 are disordered; it reads NKRQPKVQNK…EKKDGVCGPP (69 aa). S456 and S473 each carry phosphoserine. Positions 463–476 are enriched in polar residues; the sequence is GNPSDQSELESQMI. Glycyl lysine isopeptide (Lys-Gly) (interchain with G-Cter in SUMO2) cross-links involve residues K510 and K515. An N6-acetyllysine; alternate modification is found at K585. K585 is modified (N6-malonyllysine; alternate). A Glycyl lysine isopeptide (Lys-Gly) (interchain with G-Cter in SUMO2); alternate cross-link involves residue K585. S592 is modified (phosphoserine). Glycyl lysine isopeptide (Lys-Gly) (interchain with G-Cter in SUMO2) cross-links involve residues K639, K653, and K659. The tract at residues 716–757 is disordered; sequence LTNENAASPEQPGDEDAKQTAQDPCVPDSVPGCDAAAAEPSR. At T717 the chain carries Phosphothreonine. At S723 the chain carries Phosphoserine.

The protein belongs to the class I-like SAM-binding methyltransferase superfamily. RsmB/NOP family. TRM4 subfamily. As to quaternary structure, interacts with NPM1 and NCL during interphase; interaction is disrupted following phosphorylation at Ser-139. In terms of processing, phosphorylated at Ser-139 by AURKB during mitosis, leading to abolish methyltransferase activity and the interaction with NPM1. As to expression, ubiquitously expressed at low level. Up-regulated in tumors. Dynamically expressed during morphogenesis and in adult skin: in adult skin, expression is up-regulated in the bulge and hair germ as soon as the hair follicle enters its growing phase (anagen). During anagen, expressed at highest level in cells of the hair germ that give rise to the hair matrix.

The protein resides in the nucleus. The protein localises to the nucleolus. It is found in the cytoplasm. Its subcellular location is the mitochondrion. It localises to the cytoskeleton. The protein resides in the spindle. The protein localises to the secreted. It is found in the extracellular exosome. The catalysed reaction is cytidine(48) in tRNA + S-adenosyl-L-methionine = 5-methylcytidine(48) in tRNA + S-adenosyl-L-homocysteine + H(+). The enzyme catalyses cytidine(49) in tRNA + S-adenosyl-L-methionine = 5-methylcytidine(49) in tRNA + S-adenosyl-L-homocysteine + H(+). It carries out the reaction cytidine(50) in tRNA + S-adenosyl-L-methionine = 5-methylcytidine(50) in tRNA + S-adenosyl-L-homocysteine + H(+). It catalyses the reaction cytidine(34) in tRNA precursor + S-adenosyl-L-methionine = 5-methylcytidine(34) in tRNA precursor + S-adenosyl-L-homocysteine + H(+). The catalysed reaction is a cytidine in mRNA + S-adenosyl-L-methionine = a 5-methylcytidine in mRNA + S-adenosyl-L-homocysteine + H(+). Inhibited by magnesium ions. Functionally, RNA cytosine C(5)-methyltransferase that methylates cytosine to 5-methylcytosine (m5C) in various RNAs, such as tRNAs, mRNAs and some long non-coding RNAs (lncRNAs). Involved in various processes, such as epidermal stem cell differentiation, testis differentiation and maternal to zygotic transition during early development: acts by increasing protein synthesis; cytosine C(5)-methylation promoting tRNA stability and preventing mRNA decay. Methylates cytosine to 5-methylcytosine (m5C) at positions 34 and 48 of intron-containing tRNA(Leu)(CAA) precursors, and at positions 48, 49 and 50 of tRNA(Gly)(GCC) precursors. tRNA methylation is required generation of RNA fragments derived from tRNAs (tRFs). Also mediates C(5)-methylation of mitochondrial tRNAs. Catalyzes cytosine C(5)-methylation of mRNAs, leading to stabilize them and prevent mRNA decay: mRNA stabilization involves YBX1 that specifically recognizes and binds m5C-modified transcripts. Cytosine C(5)-methylation of mRNAs also regulates mRNA export: methylated transcripts are specifically recognized by THOC4/ALYREF, which mediates mRNA nucleo-cytoplasmic shuttling. Also mediates cytosine C(5)-methylation of non-coding RNAs, such as vault RNAs (vtRNAs), promoting their processing into regulatory small RNAs. Cytosine C(5)-methylation of vtRNA VTRNA1.1 promotes its processing into small-vault RNA4 (svRNA4) and regulates epidermal differentiation. May act downstream of Myc to regulate epidermal cell growth and proliferation. Required for proper spindle assembly and chromosome segregation, independently of its methyltransferase activity. The polypeptide is RNA cytosine C(5)-methyltransferase NSUN2 (Mus musculus (Mouse)).